The following is a 241-amino-acid chain: Adenosylcobinamide-GDP ribazoletransferase (241 aa).

Helical transmembrane passes span Ile24–Tyr44, Phe48–Phe68, Val103–Ile123, Val175–Ile195, and Ile218–Phe238.

Belongs to the CobS family. It depends on Mg(2+) as a cofactor.

The protein resides in the cell membrane. It catalyses the reaction alpha-ribazole + adenosylcob(III)inamide-GDP = adenosylcob(III)alamin + GMP + H(+). The catalysed reaction is alpha-ribazole 5'-phosphate + adenosylcob(III)inamide-GDP = adenosylcob(III)alamin 5'-phosphate + GMP + H(+). It participates in cofactor biosynthesis; adenosylcobalamin biosynthesis; adenosylcobalamin from cob(II)yrinate a,c-diamide: step 7/7. Joins adenosylcobinamide-GDP and alpha-ribazole to generate adenosylcobalamin (Ado-cobalamin). Also synthesizes adenosylcobalamin 5'-phosphate from adenosylcobinamide-GDP and alpha-ribazole 5'-phosphate. This chain is Adenosylcobinamide-GDP ribazoletransferase, found in Picrophilus torridus (strain ATCC 700027 / DSM 9790 / JCM 10055 / NBRC 100828 / KAW 2/3).